The primary structure comprises 2529 residues: Zinc finger FYVE domain-containing protein 26 (2529 aa).

Disordered stretches follow at residues 584–650 (HLPE…PGPH), 689–709 (SSHR…SAAR), and 733–810 (VTSN…RFQT). Residues serine 605 and serine 609 each carry the phosphoserine modification. The span at 689 to 701 (SSHRTPEETKLPE) shows a compositional bias: basic and acidic residues. Basic residues predominate over residues 755–765 (SSLRRGRRTRR). The span at 778–796 (SLEGTSSELSTSTSEGSLS) shows a compositional bias: low complexity. Serine 791 bears the Phosphoserine mark. A compositionally biased stretch (polar residues) spans 797–810 (AVSGQVESDSRFQT). The stretch at 859–884 (MFVERYQEVIQELARVEHKIENQNSD) forms a coiled coil. Residues 1258–1286 (GLPLSTLGSPRPSENPSAERKSHSSPKDS) are disordered. Positions 1263–1273 (TLGSPRPSENP) are enriched in polar residues. Basic and acidic residues predominate over residues 1274–1283 (SAERKSHSSP). A coiled-coil region spans residues 1488–1515 (VSDMAVQEELKSELQRKLMELRVYQKIL). Phosphoserine occurs at positions 1732, 1754, 1770, and 1772. The segment at 1762–1799 (APGSALVRSPSPKERAFPQTQPPVEFVPPETPPARDQW) is disordered. The segment at 1802-1862 (DETESVCMVC…VCDQCYSYYN (61 aa)) adopts an FYVE-type zinc-finger fold. 8 residues coordinate Zn(2+): cysteine 1808, cysteine 1811, cysteine 1825, cysteine 1828, cysteine 1833, cysteine 1836, cysteine 1854, and cysteine 1857. The disordered stretch occupies residues 1865–1884 (TPEESPCQSEVPDSAKNESP).

The protein belongs to the ZFYVE26 family. Interacts with AP5Z1, AP5B1, AP5S1 and SPG11. Interacts with TTC19 and KIF13A.

The protein localises to the cytoplasm. It localises to the cytoskeleton. It is found in the microtubule organizing center. The protein resides in the centrosome. Its subcellular location is the midbody. Functionally, phosphatidylinositol 3-phosphate-binding protein required for the abscission step in cytokinesis: recruited to the midbody during cytokinesis and acts as a regulator of abscission. May also be required for efficient homologous recombination DNA double-strand break repair. The protein is Zinc finger FYVE domain-containing protein 26 (Zfyve26) of Mus musculus (Mouse).